A 223-amino-acid chain; its full sequence is Ras-related protein Rab-37 (223 aa).

Residues 1 to 13 are compositionally biased toward low complexity; that stretch reads MTGTPGAATAGDG. The disordered stretch occupies residues 1–22; it reads MTGTPGAATAGDGEAPERSPPF. The residue at position 2 (Thr-2) is an N-acetylthreonine. 8 residues coordinate GTP: Ser-38, Gly-39, Val-40, Gly-41, Lys-42, Thr-43, Cys-44, and Thr-62. Position 43 (Thr-43) interacts with Mg(2+). Short sequence motifs (switch) lie at residues 52-67 and 85-102; these read GAFL…GIDS and DTAG…YYRD. Thr-62 and Asp-85 together coordinate Mg(2+). GTP-binding residues include Gly-88, Asn-143, Lys-144, Asp-146, Ser-173, Ala-174, and Lys-175. 2 S-geranylgeranyl cysteine lipidation sites follow: Cys-219 and Cys-220. The residue at position 220 (Cys-220) is a Cysteine methyl ester. Positions 221–223 are cleaved as a propeptide — removed in mature form; the sequence is SFV.

This sequence belongs to the small GTPase superfamily. Rab family. As to quaternary structure, interacts with RIMS1. Interacts (in GDP-bound form) with RPGR, RPGR functions as guanine exchange factor (GEF). Mg(2+) serves as cofactor. Expressed in the retina (at protein level). Specifically expressed in the bone marrow mast cells.

Its subcellular location is the cytoplasmic vesicle. The protein resides in the cell projection. It localises to the cilium. The catalysed reaction is GTP + H2O = GDP + phosphate + H(+). With respect to regulation, regulated by guanine nucleotide exchange factors (GEFs) including RPGR which promote the exchange of bound GDP for free GTP. Regulated by GTPase activating proteins (GAPs) which increase the GTP hydrolysis activity. Inhibited by GDP dissociation inhibitors (GDIs). In terms of biological role, the small GTPases Rab are key regulators of intracellular membrane trafficking, from the formation of transport vesicles to their fusion with membranes. Rabs cycle between an inactive GDP-bound form and an active GTP-bound form that is able to recruit to membranes different sets of downstream effectors directly responsible for vesicle formation, movement, tethering and fusion. Acts as an organizer for autophagosome biogenesis in a GTP-dependent manner. Involved in retinal homeostasis by autophagy regulation. The polypeptide is Ras-related protein Rab-37 (Mus musculus (Mouse)).